Consider the following 200-residue polypeptide: Shikimate kinase (200 aa).

Residue 33–38 (GAGKST) coordinates ATP. S37 serves as a coordination point for Mg(2+). Substrate is bound by residues D55, R79, and G101. Residue R139 participates in ATP binding. Residue R158 participates in substrate binding.

The protein belongs to the shikimate kinase family. As to quaternary structure, monomer. Mg(2+) is required as a cofactor.

The protein localises to the cytoplasm. It catalyses the reaction shikimate + ATP = 3-phosphoshikimate + ADP + H(+). It participates in metabolic intermediate biosynthesis; chorismate biosynthesis; chorismate from D-erythrose 4-phosphate and phosphoenolpyruvate: step 5/7. Its function is as follows. Catalyzes the specific phosphorylation of the 3-hydroxyl group of shikimic acid using ATP as a cosubstrate. The protein is Shikimate kinase of Brucella abortus (strain S19).